The chain runs to 76 residues: Acyl carrier protein (76 aa).

Residues 1 to 76 (MSVEEKVKKI…DAIDYIAGKQ (76 aa)) enclose the Carrier domain. S36 is modified (O-(pantetheine 4'-phosphoryl)serine).

It belongs to the acyl carrier protein (ACP) family. In terms of processing, 4'-phosphopantetheine is transferred from CoA to a specific serine of apo-ACP by AcpS. This modification is essential for activity because fatty acids are bound in thioester linkage to the sulfhydryl of the prosthetic group.

It is found in the cytoplasm. It functions in the pathway lipid metabolism; fatty acid biosynthesis. In terms of biological role, carrier of the growing fatty acid chain in fatty acid biosynthesis. This Oleidesulfovibrio alaskensis (strain ATCC BAA-1058 / DSM 17464 / G20) (Desulfovibrio alaskensis) protein is Acyl carrier protein.